A 123-amino-acid polypeptide reads, in one-letter code: Homeobox protein CDX-1 (123 aa).

A DNA-binding region (homeobox) is located at residues 5 to 64; sequence KDKYRVVYTDHQRLELEKEFHYSRYITIRRKSELAANLGLTERQVKIWFQNRRAKERKVN. The interaction with DNA stretch occupies residues 8-29; that stretch reads YRVVYTDHQRLELEKEFHYSRY. The segment at 47–58 is interaction with 5-mCpG DNA; sequence RQVKIWFQNRRA. Over residues 57–68 the composition is skewed to basic residues; it reads RAKERKVNKKKQ. Positions 57 to 123 are disordered; that stretch reads RAKERKVNKK…PVPVKEEFLP (67 aa).

It belongs to the Caudal homeobox family. Intestinal epithelium.

It localises to the nucleus. Its function is as follows. Plays a role in transcriptional regulation. Involved in activated KRAS-mediated transcriptional activation of PRKD1 in colorectal cancer (CRC) cells. Binds to the PRKD1 promoter in colorectal cancer (CRC) cells. Could play a role in the terminal differentiation of the intestine. Binds preferentially to methylated DNA. The chain is Homeobox protein CDX-1 (Cdx1) from Rattus norvegicus (Rat).